Reading from the N-terminus, the 106-residue chain is Nucleoid-associated protein Smal_0858 (106 aa).

Positions 81-106 (IDAESKSKMGSATAGMQLPPGMKLPF) are disordered.

This sequence belongs to the YbaB/EbfC family. Homodimer.

Its subcellular location is the cytoplasm. The protein localises to the nucleoid. Its function is as follows. Binds to DNA and alters its conformation. May be involved in regulation of gene expression, nucleoid organization and DNA protection. This chain is Nucleoid-associated protein Smal_0858, found in Stenotrophomonas maltophilia (strain R551-3).